Consider the following 175-residue polypeptide: UPF0178 protein GOX1710 (175 aa).

It belongs to the UPF0178 family.

This Gluconobacter oxydans (strain 621H) (Gluconobacter suboxydans) protein is UPF0178 protein GOX1710.